We begin with the raw amino-acid sequence, 190 residues long: Glutamyl-tRNA(Gln) amidotransferase subunit C, mitochondrial (190 aa).

A mitochondrion-targeting transit peptide spans 1-96 (MISFQIILQQ…VLNLKQAVRF (96 aa)). The tract at residues 28–57 (KSNSTAVGSSDEDDEIYVPKKPIPSPIDQS) is disordered.

It belongs to the GatC family. In terms of assembly, subunit of the heterotrimeric GatCAB amidotransferase (AdT) complex, composed of A, B and C subunits.

It is found in the mitochondrion. It carries out the reaction L-glutamyl-tRNA(Gln) + L-glutamine + ATP + H2O = L-glutaminyl-tRNA(Gln) + L-glutamate + ADP + phosphate + H(+). Functionally, allows the formation of correctly charged Gln-tRNA(Gln) through the transamidation of misacylated Glu-tRNA(Gln) in the mitochondria. The reaction takes place in the presence of glutamine and ATP through an activated gamma-phospho-Glu-tRNA(Gln). In Loa loa (Eye worm), this protein is Glutamyl-tRNA(Gln) amidotransferase subunit C, mitochondrial.